The primary structure comprises 176 residues: N-alpha-acetyltransferase NAT5 (176 aa).

One can recognise an N-acetyltransferase domain in the interval 14–176 (NNLGMLTKLA…DAILLKKHIS (163 aa)).

This sequence belongs to the acetyltransferase family. As to quaternary structure, component of the N-terminal acetyltransferase A (NatA) complex, which is composed of ARD1, NAT1 and NAT5.

The protein localises to the cytoplasm. It carries out the reaction N-terminal L-methionyl-L-alanyl-[protein] + acetyl-CoA = N-terminal N(alpha)-acetyl-L-methionyl-L-alanyl-[protein] + CoA + H(+). The catalysed reaction is N-terminal L-methionyl-L-seryl-[protein] + acetyl-CoA = N-terminal N(alpha)-acetyl-L-methionyl-L-seryl-[protein] + CoA + H(+). The enzyme catalyses N-terminal L-methionyl-L-valyl-[protein] + acetyl-CoA = N-terminal N(alpha)-acetyl-L-methionyl-L-valyl-[protein] + CoA + H(+). It catalyses the reaction N-terminal L-methionyl-L-threonyl-[protein] + acetyl-CoA = N-terminal N(alpha)-acetyl-L-methionyl-L-threonyl-[protein] + CoA + H(+). It carries out the reaction N-terminal L-methionyl-L-lysyl-[protein] + acetyl-CoA = N-terminal N(alpha)-acetyl-L-methionyl-L-lysyl-[protein] + CoA + H(+). The catalysed reaction is N-terminal L-methionyl-L-leucyl-[protein] + acetyl-CoA = N-terminal N(alpha)-acetyl-L-methionyl-L-leucyl-[protein] + CoA + H(+). The enzyme catalyses N-terminal L-methionyl-L-phenylalanyl-[protein] + acetyl-CoA = N-terminal N(alpha)-acetyl-L-methionyl-L-phenylalanyl-[protein] + CoA + H(+). It catalyses the reaction N-terminal L-methionyl-L-tyrosyl-[protein] + acetyl-CoA = N-terminal N(alpha)-acetyl-L-methionyl-L-tyrosyl-[protein] + CoA + H(+). In terms of biological role, N-alpha-acetyltransferase that acetylates the N-terminus of proteins that retain their initiating methionine. Has a broad substrate specificity: able to acetylate the initiator methionine of most peptides. Non-essential component of the NatA N-terminal acetyltransferase. The chain is N-alpha-acetyltransferase NAT5 from Saccharomyces cerevisiae (strain ATCC 204508 / S288c) (Baker's yeast).